The chain runs to 498 residues: Guanosine-5'-triphosphate,3'-diphosphate pyrophosphatase (498 aa).

The protein belongs to the GppA/Ppx family. GppA subfamily.

The enzyme catalyses guanosine 3'-diphosphate 5'-triphosphate + H2O = guanosine 3',5'-bis(diphosphate) + phosphate + H(+). It functions in the pathway purine metabolism; ppGpp biosynthesis; ppGpp from GTP: step 2/2. Functionally, catalyzes the conversion of pppGpp to ppGpp. Guanosine pentaphosphate (pppGpp) is a cytoplasmic signaling molecule which together with ppGpp controls the 'stringent response', an adaptive process that allows bacteria to respond to amino acid starvation, resulting in the coordinated regulation of numerous cellular activities. This Serratia proteamaculans (strain 568) protein is Guanosine-5'-triphosphate,3'-diphosphate pyrophosphatase.